A 231-amino-acid polypeptide reads, in one-letter code: 2,3-bisphosphoglycerate-dependent phosphoglycerate mutase (231 aa).

Substrate-binding positions include 10 to 17, 23 to 24, Arg62, 89 to 92, Lys100, 116 to 117, and 185 to 186; these read RHGQSEWN, TG, ERHY, RR, and GN. His11 (tele-phosphohistidine intermediate) is an active-site residue. The active-site Proton donor/acceptor is the Glu89.

Belongs to the phosphoglycerate mutase family. BPG-dependent PGAM subfamily. In terms of assembly, homodimer.

The enzyme catalyses (2R)-2-phosphoglycerate = (2R)-3-phosphoglycerate. The protein operates within carbohydrate degradation; glycolysis; pyruvate from D-glyceraldehyde 3-phosphate: step 3/5. Catalyzes the interconversion of 2-phosphoglycerate and 3-phosphoglycerate. The sequence is that of 2,3-bisphosphoglycerate-dependent phosphoglycerate mutase from Buchnera aphidicola subsp. Acyrthosiphon pisum (strain 5A).